The primary structure comprises 175 residues: uncharacterized protein (175 aa).

Residues methionine 1 to threonine 10 show a composition bias toward polar residues. The disordered stretch occupies residues methionine 1–serine 21.

This is an uncharacterized protein from Ureaplasma parvum serovar 3 (strain ATCC 700970).